A 1368-amino-acid chain; its full sequence is Kinesin-like protein KIF24 (1368 aa).

The SAM domain maps to 1–64 (MASWLYECLC…FQLIKIIKIM (64 aa)). Residues 89-112 (ELRSGPRRQLNFDSPADNKDRNAS) are disordered. Residues S102 and S112 each carry the phosphoserine modification. Residues 223 to 546 (KIRVCVRKRP…LRYADRVKEL (324 aa)) form the Kinesin motor domain. 313–320 (GQTGAGKT) provides a ligand contact to ATP. Position 478 is a phosphoserine (S478). The segment at 478 to 709 (SLLALKECIR…STKCKKVQTV (232 aa)) is interaction with MPHOSPH9. Polar residues predominate over residues 557-576 (TSRNRTSGNSSPKRIQSSPG). Disordered regions lie at residues 557–584 (TSRN…DKCS) and 602–639 (GSTR…SPSQ). Residue S584 is modified to Phosphoserine. The residue at position 621 (T621) is a Phosphothreonine; by NEK2. S622 carries the post-translational modification Phosphoserine; by NEK2. Residue S646 is modified to Phosphoserine. 5 disordered regions span residues 651–670 (TVRS…PLCS), 729–753 (HRAE…WTNI), 792–849 (QYRP…NTLE), 864–938 (GPEK…LAEK), and 952–984 (RGGG…EEDG). The span at 819–830 (QVEELDDSDFSE) shows a compositional bias: acidic residues. 2 positions are modified to phosphoserine: S826 and S829. Composition is skewed to polar residues over residues 839–849 (QRATKQRNTLE) and 871–881 (ERQQSLFSSPR). The segment covering 882-906 (TGDKKDLTKSWVDSRDPINHRRAAL) has biased composition (basic and acidic residues). S1012 carries the phosphoserine modification. 2 disordered regions span residues 1054–1073 (MSLL…QLVQ) and 1086–1148 (GGPV…SREA). A compositionally biased stretch (polar residues) spans 1106–1119 (SSATRHLWLSSSPP). Positions 1138–1148 (HPADKLPSREA) are enriched in basic and acidic residues.

It belongs to the TRAFAC class myosin-kinesin ATPase superfamily. Kinesin family. Interacts with CCP110, CEP97, TALPID3. Interacts with MPHOSPH9.

It is found in the cytoplasm. Its subcellular location is the cytoskeleton. The protein localises to the microtubule organizing center. It localises to the centrosome. The protein resides in the centriole. Microtubule-dependent motor protein that acts as a negative regulator of ciliogenesis by mediating recruitment of CCP110 to mother centriole in cycling cells, leading to restrict nucleation of cilia at centrioles. Mediates depolymerization of microtubules of centriolar origin, possibly to suppress aberrant cilia formation. Following activation by NEK2 involved in disassembly of primary cilium during G2/M phase but does not disassemble fully formed ciliary axonemes. As cilium assembly and disassembly is proposed to coexist in a dynamic equilibrium may suppress nascent cilium assembly and, potentially, ciliar re-assembly in cells that have already disassembled their cilia ensuring the completion of cilium removal in the later stages of the cell cycle. Plays an important role in recruiting MPHOSPH9, a negative regulator of cilia formation to the distal end of mother centriole. This is Kinesin-like protein KIF24 (KIF24) from Homo sapiens (Human).